Here is a 328-residue protein sequence, read N- to C-terminus: MNRRNFIKAASCGALLTGALPSVSHAAAENRPPIPGSLGMLYDSTLCVGCQACVTKCQDINFPERNPQGEQTWSNNDKLSPYTNNIIQVWTSGTGVNKDQEENGYAYIKKQCMHCVDPNCVSVCPVSALKKDPKTGIVHYDKDVCTGCRYCMVACPYNVPKYDYNNPFGALHKCELCNQKGVERLDKGGLPGCVEVCPAGAVIFGTREELMAEAKKRLALKPGSEYHYPRQTLKSGDTYLHTVPKYYPHLYGEKEGGGTQVLVLTGVPYENLDLPKLDDLSTGARSENIQHTLYKGMMLPLAVLAGLTVLVRRNTKNDHHDGGDDHES.

A signal peptide spans M1–A27. 4Fe-4S ferredoxin-type domains are found at residues L38–Q68, N103–K134, and G136–N165. C47, C50, C53, C57, C112, C115, C120, C124, C145, C148, C151, C155, C174, C177, C193, and C197 together coordinate [4Fe-4S] cluster.

It depends on [4Fe-4S] cluster as a cofactor.

It is found in the periplasm. In terms of biological role, participates in the periplasmic electron-transferring activity of hydrogenase 2 during its catalytic turnover. The chain is Hydrogenase-2 operon protein HybA (hybA) from Escherichia coli O157:H7.